Reading from the N-terminus, the 249-residue chain is MSVEDLKATVTKLQDRISYLEQKAGVVPNVPKSVRMVLIGPPGAGKGTQAPNLKEKYCACHLATGDMLRAQVAAKSALGVEAKKIMDQGGLVSDEIMVNMIKSELENNKECSNGFILDGFPRTIPQAEKLDSMLETRKTPLENAVELKIDDELLVARITGRLVHPASGRSYHKLFNPPKKDMIDDVSGDALVQRSDDNEDALKKRLVTYHKQTEPIVDYYRKTGIWSGVDASQKPGKVWDDILKCLGQK.

Residue 43–48 participates in ATP binding; that stretch reads GAGKGT. An NMP region spans residues 63 to 92; the sequence is ATGDMLRAQVAAKSALGVEAKKIMDQGGLV. Residues T64, R69, 90–92, 119–122, and Q126 each bind AMP; these read GLV and GFPR. Residues 160-197 are LID; it reads GRLVHPASGRSYHKLFNPPKKDMIDDVSGDALVQRSDD. ATP is bound by residues R161 and 170-171; that span reads SY. AMP is bound by residues R194 and R205. Residue Q233 coordinates ATP.

This sequence belongs to the adenylate kinase family. AK2 subfamily. In terms of assembly, monomer.

The protein resides in the cytoplasm. It localises to the cytosol. Its subcellular location is the mitochondrion intermembrane space. It catalyses the reaction AMP + ATP = 2 ADP. Its function is as follows. Catalyzes the reversible transfer of the terminal phosphate group between ATP and AMP. Plays an important role in cellular energy homeostasis and in adenine nucleotide metabolism. Adenylate kinase activity is critical for regulation of the phosphate utilization and the AMP de novo biosynthesis pathways. The chain is Adenylate kinase from Debaryomyces hansenii (strain ATCC 36239 / CBS 767 / BCRC 21394 / JCM 1990 / NBRC 0083 / IGC 2968) (Yeast).